We begin with the raw amino-acid sequence, 206 residues long: 2,3-bisphosphoglycerate-dependent phosphoglycerate mutase (206 aa).

Substrate-binding positions include Arg9 to Asn16, Thr22 to Gly23, Arg61, Glu88 to Tyr91, Lys99, Arg115 to Arg116, and Gly159 to Asn160. The active-site Tele-phosphohistidine intermediate is His10. The active-site Proton donor/acceptor is the Glu88.

Belongs to the phosphoglycerate mutase family. BPG-dependent PGAM subfamily. Homodimer.

It catalyses the reaction (2R)-2-phosphoglycerate = (2R)-3-phosphoglycerate. It participates in carbohydrate degradation; glycolysis; pyruvate from D-glyceraldehyde 3-phosphate: step 3/5. Catalyzes the interconversion of 2-phosphoglycerate and 3-phosphoglycerate. The polypeptide is 2,3-bisphosphoglycerate-dependent phosphoglycerate mutase (Methylocella silvestris (strain DSM 15510 / CIP 108128 / LMG 27833 / NCIMB 13906 / BL2)).